The primary structure comprises 596 residues: Leucine zipper putative tumor suppressor 1 (596 aa).

A lipid anchor (N-myristoyl glycine) is attached at glycine 2. Disordered regions lie at residues 136-193 (AILH…SYQL) and 295-324 (YEERPRRCRDELEGPEPKGGNKLKQASQKS). The segment covering 153–162 (PPDKPKEQEL) has biased composition (basic and acidic residues). The span at 178–190 (SMSSLPTHSTSSS) shows a compositional bias: low complexity. Residues 256–374 (ISTDECSIQE…SYEREKTSFG (119 aa)) adopt a coiled-coil conformation. The segment covering 295 to 310 (YEERPRRCRDELEGPE) has biased composition (basic and acidic residues).

The protein belongs to the LZTS family. As to quaternary structure, binds EEF1G, TLK2 and CDK1. Phosphorylated on serine residues. Hyperphosphorylated by the cAMP-dependent kinase PKA during cell-cycle progression. In terms of tissue distribution, highly expressed in testis, prostate, spleen, thymus, ovary and brain. Detected at lower levels in heart, placenta, small intestine, colon, liver, kidney, skeletal muscle and pancreas. Not detectable in primary tumors from breast and prostate and in many cancer cell lines.

It localises to the cytoplasm. It is found in the cell membrane. The protein localises to the cell projection. Its subcellular location is the dendritic spine. The protein resides in the postsynaptic density. It localises to the synapse. Involved in the regulation of cell growth. May stabilize the active CDC2-cyclin B1 complex and thereby contribute to the regulation of the cell cycle and the prevention of uncontrolled cell proliferation. May act as a tumor suppressor. This is Leucine zipper putative tumor suppressor 1 (LZTS1) from Homo sapiens (Human).